We begin with the raw amino-acid sequence, 470 residues long: Putative ankyrin repeat protein L279 (470 aa).

ANK repeat units follow at residues 119 to 148 (RDDYMLEWACAGNFTEVARYLLKIGANPGT), 149 to 178 (NKYACFESAVRNGNYDMVKLLLENIPGSDK), 372 to 401 (ETQGLLTNACQYNNSELVKYLLEKGANVNE), and 403 to 431 (NGKPLREAIKNNNKDIIKNLMDYSPDISL).

The protein is Putative ankyrin repeat protein L279 of Acanthamoeba polyphaga (Amoeba).